We begin with the raw amino-acid sequence, 95 residues long: Aspartyl/glutamyl-tRNA(Asn/Gln) amidotransferase subunit C (95 aa).

Belongs to the GatC family. As to quaternary structure, heterotrimer of A, B and C subunits.

It catalyses the reaction L-glutamyl-tRNA(Gln) + L-glutamine + ATP + H2O = L-glutaminyl-tRNA(Gln) + L-glutamate + ADP + phosphate + H(+). The catalysed reaction is L-aspartyl-tRNA(Asn) + L-glutamine + ATP + H2O = L-asparaginyl-tRNA(Asn) + L-glutamate + ADP + phosphate + 2 H(+). In terms of biological role, allows the formation of correctly charged Asn-tRNA(Asn) or Gln-tRNA(Gln) through the transamidation of misacylated Asp-tRNA(Asn) or Glu-tRNA(Gln) in organisms which lack either or both of asparaginyl-tRNA or glutaminyl-tRNA synthetases. The reaction takes place in the presence of glutamine and ATP through an activated phospho-Asp-tRNA(Asn) or phospho-Glu-tRNA(Gln). The polypeptide is Aspartyl/glutamyl-tRNA(Asn/Gln) amidotransferase subunit C (Rhizobium etli (strain ATCC 51251 / DSM 11541 / JCM 21823 / NBRC 15573 / CFN 42)).